The primary structure comprises 522 residues: MKKVYEGEIMFVKVNGEEVELPDGSTVRDALEATGAPYVEGTLVCLISGTRELERTIDTYRIRTTTGSILLELLPDDAPGIVEEWRRIYTELENMRIRWTTPSEIAMGPLRTELEPSRDEFTYDEDEVIMSLSGFSPDSTHIIISKEPHSAVYGVPRENRGVFARITGGKRTVERLTQDDVVKSVEPVVERKSIVESAAVTDLNTELEDGNQLFTYVKVKPSPESPQSVEHFFSMVEDGKLRVDYEANSFIGFYSLQGIKKDPEKIDKRNRGAVTLRNTGRGSGRVYIYREDRVSTPSHNLIGHVTEGMELVDIAGEGDQITVECEPGRIMTVAMTQKEAEDYLREYGIEQIREGIMDDDAIVVVQDPPYTMDILREGKVRTLGIDPDKILEIELDPAAPRSSWYFRRLTGLIDTPIGSLKVHFAFPGMKVVMFEGDKSLAKGLIPENTPERCVKKGNIGITNMSRRHIGMVGVRLEDNDEYGPTGEPFNGTNMIGKITGGIENVEKLKEGDTVYVRERKRG.

The protein belongs to the UPF0288 family.

The chain is UPF0288 protein MTH_1865 from Methanothermobacter thermautotrophicus (strain ATCC 29096 / DSM 1053 / JCM 10044 / NBRC 100330 / Delta H) (Methanobacterium thermoautotrophicum).